The following is a 771-amino-acid chain: Caldesmon (771 aa).

Disordered stretches follow at residues 23–91 (ERLS…ALLE) and 104–599 (LQEA…FSPK). The interval 26–199 (SYQRNDDDEE…PKEVPTEENQ (174 aa)) is myosin and calmodulin-binding. The residue at position 27 (Tyr27) is a Phosphotyrosine. 9 stretches are compositionally biased toward basic and acidic residues: residues 47 to 67 (QERL…EKSE), 104 to 115 (LQEALERQKEFD), 139 to 155 (ITGK…RCEI), 170 to 194 (WRQD…KEVP), 203 to 215 (AVEK…EVVE), 240 to 435 (AADK…ESLP), 442 to 484 (SKKD…RELT), 509 to 518 (GSEKLKEKQQ), and 525 to 592 (DELK…EKKP). Repeat copies occupy residues 251-265 (EREK…RLKA), 266-278 (EEEK…KQKA), 279-291 (EEEK…RERA), 294-306 (EEEK…RERA), 309-321 (EEER…RERA), 324-336 (EEER…RAKA), 337-349 (EEER…RAKA), 350-362 (EEER…RAKA), 363-375 (EKER…RERA), and 378-390 (EEEK…KARL). The tract at residues 251 to 390 (EREKLEAEEK…KRAAEEKARL (140 aa)) is 10 X 13 AA approximate tandem repeats. Positions 523-580 (ELDELKKRREERRKILEEEEQKKKQEEAERKIREEEEKKRMKEEIERRRAEAAEKRQK) are tropomyosin-binding. At Ser597 the chain carries Phosphoserine; by CDK1. The segment at 612-644 (LNKSAQKSGMKPAHTTAVVSKIDSRLEQYTSAV) is strong actin-binding. The interval 622–632 (KPAHTTAVVSK) is tropomyosin-binding. Position 640 is a phosphotyrosine (Tyr640). A calmodulin-binding region spans residues 674–680 (WEKGNVF). The segment at 676–771 (KGNVFSSPGG…NGLRQFEKEP (96 aa)) is disordered. Residues 679 to 691 (VFSSPGGTGTPNK) show a composition bias toward polar residues. Position 682 is a phosphoserine; by CDK1 (Ser682). A phosphothreonine; by CDK1 mark is found at Thr688 and Thr711. At Ser717 the chain carries Phosphoserine; by CDK1. Positions 723–742 (SDLRPGDVSGKRNLWEKQSV) are enriched in basic and acidic residues. The interval 726–752 (RPGDVSGKRNLWEKQSVEKPAASSSKV) is weak actin-binding.

Belongs to the caldesmon family. In terms of processing, phosphorylated in non-muscle cells. Phosphorylation by CDK1 during mitosis causes caldesmon to dissociate from microfilaments. Phosphorylation reduces caldesmon binding to actin, myosin, and calmodulin as well as its inhibition of actomyosin ATPase activity. Phosphorylation also occurs in both quiescent and dividing smooth muscle cells with similar effects on the interaction with actin and calmodulin and on microfilaments reorganization. As to expression, high-molecular-weight caldesmon (h-caldesmon) is predominantly expressed in smooth muscles, whereas low-molecular-weight caldesmon (l-caldesmon) is widely distributed in non-muscle tissues and cells. Not expressed in skeletal muscle or heart.

Its subcellular location is the cytoplasm. It is found in the cytoskeleton. The protein resides in the myofibril. The protein localises to the stress fiber. In terms of biological role, actin- and myosin-binding protein implicated in the regulation of actomyosin interactions in smooth muscle and nonmuscle cells (could act as a bridge between myosin and actin filaments). Stimulates actin binding of tropomyosin which increases the stabilization of actin filament structure. In muscle tissues, inhibits the actomyosin ATPase by binding to F-actin. This inhibition is attenuated by calcium-calmodulin and is potentiated by tropomyosin. Interacts with actin, myosin, two molecules of tropomyosin and with calmodulin. Also plays an essential role during cellular mitosis and receptor capping. This Gallus gallus (Chicken) protein is Caldesmon (CALD1).